A 338-amino-acid chain; its full sequence is Cytoskeleton protein RodZ (338 aa).

Residues 1–111 (MNTEATHEEN…LGKSRKKRDG (111 aa)) lie on the Cytoplasmic side of the membrane. An HTH cro/C1-type domain is found at 19 to 71 (LRLAREQLGLSQQVVAERLCLKVSTVRDIEEDKAPADLASTFLRGYIRSYARL). A DNA-binding region (H-T-H motif) is located at residues 30 to 49 (QQVVAERLCLKVSTVRDIEE). The chain crosses the membrane as a helical; Signal-anchor for type II membrane protein span at residues 112-132 (WLMSFTWLVLFVVVGLTGAWW). The Periplasmic segment spans residues 133 to 338 (WQNHKAQQEE…TLNAEQSVTQ (206 aa)). Polar residues-rich tracts occupy residues 147–180 (ADQS…QDQA) and 189–214 (GDTQ…SQQP). Residues 147–245 (ADQSSAELSQ…AQSQLPVGQA (99 aa)) are disordered. The segment covering 220 to 239 (SQANTDTAAQQNTTQPAQSQ) has biased composition (low complexity).

Belongs to the RodZ family.

Its subcellular location is the cell inner membrane. Cytoskeletal protein that is involved in cell-shape control through regulation of the length of the long axis. The sequence is that of Cytoskeleton protein RodZ from Cronobacter sakazakii (strain ATCC BAA-894) (Enterobacter sakazakii).